Here is a 269-residue protein sequence, read N- to C-terminus: NAD kinase (269 aa).

The Proton acceptor role is filled by Asp-45. NAD(+) contacts are provided by residues 45–46, 122–123, Arg-149, Asp-151, and Ala-186; these read DG and NE.

It belongs to the NAD kinase family. The cofactor is a divalent metal cation.

It localises to the cytoplasm. The catalysed reaction is NAD(+) + ATP = ADP + NADP(+) + H(+). Involved in the regulation of the intracellular balance of NAD and NADP, and is a key enzyme in the biosynthesis of NADP. Catalyzes specifically the phosphorylation on 2'-hydroxyl of the adenosine moiety of NAD to yield NADP. This is NAD kinase from Staphylococcus aureus (strain Mu3 / ATCC 700698).